The chain runs to 102 residues: RNA-binding protein Hfq (102 aa).

The 60-residue stretch at 9-68 folds into the Sm domain; sequence DPFLNALRRERVPVSIYLVNGIKLQGQIESFDQFVILLKNTVSQMVYKHAISTVVPSRPV. Residues 64–102 are disordered; sequence PSRPVSHHSNTPSGGTSNYHHGNNPSAPQQPQQESDDAE. Over residues 70 to 96 the composition is skewed to polar residues; the sequence is HHSNTPSGGTSNYHHGNNPSAPQQPQQ.

The protein belongs to the Hfq family. As to quaternary structure, homohexamer.

RNA chaperone that binds small regulatory RNA (sRNAs) and mRNAs to facilitate mRNA translational regulation in response to envelope stress, environmental stress and changes in metabolite concentrations. Also binds with high specificity to tRNAs. In Serratia proteamaculans (strain 568), this protein is RNA-binding protein Hfq.